The following is a 540-amino-acid chain: Putative laccase-11 (540 aa).

3 consecutive Plastocyanin-like domains span residues 1–114, 124–279, and 389–523; these read MATV…PPRG, REVP…YYGA, and NFPA…NDGP. Residues His48, His50, His93, and His95 each contribute to the Cu cation site. Cu cation contacts are provided by His440, His443, His445, His502, Cys503, His504, and His508.

It belongs to the multicopper oxidase family. The cofactor is Cu cation.

It localises to the secreted. It is found in the extracellular space. The protein localises to the apoplast. The catalysed reaction is 4 hydroquinone + O2 = 4 benzosemiquinone + 2 H2O. Functionally, lignin degradation and detoxification of lignin-derived products. The chain is Putative laccase-11 (LAC11) from Oryza sativa subsp. japonica (Rice).